The primary structure comprises 120 residues: Adenosylhomocysteinase (120 aa).

Residue Asn34 coordinates NAD(+).

Belongs to the adenosylhomocysteinase family. NAD(+) serves as cofactor.

The protein resides in the cytoplasm. The enzyme catalyses S-adenosyl-L-homocysteine + H2O = L-homocysteine + adenosine. Its pathway is amino-acid biosynthesis; L-homocysteine biosynthesis; L-homocysteine from S-adenosyl-L-homocysteine: step 1/1. Its function is as follows. May play a key role in the regulation of the intracellular concentration of adenosylhomocysteine. This is Adenosylhomocysteinase (ahcY) from Streptomyces fradiae (Streptomyces roseoflavus).